Consider the following 618-residue polypeptide: ELMO domain-containing protein C (618 aa).

Positions 1–72 (MERYRIRRER…EELRLQGDRF (72 aa)) form a coiled coil. Disordered regions lie at residues 153–175 (NFDNNNNNNNNSNNNNNGNKPSL) and 245–276 (TTTTTTTTTTTTTTTTTTTTTTTTTPTSSTTV). Composition is skewed to low complexity over residues 156–171 (NNNNNNNNSNNNNNGN) and 245–275 (TTTTTTTTTTTTTTTTTTTTTTTTTPTSSTT). Positions 382–545 (DHEEYLKHLW…KLKSQLNEIS (164 aa)) constitute an ELMO domain. 2 stretches are compositionally biased toward low complexity: residues 574-592 (QQQQQLQQQQQSLPLPSSP) and 602-618 (TTTSSTSISPSKNTQNN). A disordered region spans residues 574–618 (QQQQQLQQQQQSLPLPSSPRSFLNNYQQTTTSSTSISPSKNTQNN).

This Dictyostelium discoideum (Social amoeba) protein is ELMO domain-containing protein C (elmoC).